A 221-amino-acid polypeptide reads, in one-letter code: Pectate lyase C (221 aa).

A signal peptide spans 1-28; the sequence is MKRLAGTVILSGLLVCGFGQALPEKALA.

It belongs to the polysaccharide lyase 3 family. Ca(2+) serves as cofactor.

Its subcellular location is the secreted. It catalyses the reaction Eliminative cleavage of (1-&gt;4)-alpha-D-galacturonan to give oligosaccharides with 4-deoxy-alpha-D-galact-4-enuronosyl groups at their non-reducing ends.. The enzyme catalyses Eliminative cleavage of (1-&gt;4)-alpha-D-galacturonan methyl ester to give oligosaccharides with 4-deoxy-6-O-methyl-alpha-D-galact-4-enuronosyl groups at their non-reducing ends.. The protein operates within glycan metabolism; pectin degradation; 2-dehydro-3-deoxy-D-gluconate from pectin: step 2/5. Its function is as follows. Catalyzes the depolymerization of both polygalacturonate and pectins of methyl esterification degree from 22 to 89%, with an endo mode of action. In contrast to the majority of pectate lyases, displays high activity on highly methylated pectins. This chain is Pectate lyase C (pelC), found in Bacillus licheniformis (strain ATCC 14580 / DSM 13 / JCM 2505 / CCUG 7422 / NBRC 12200 / NCIMB 9375 / NCTC 10341 / NRRL NRS-1264 / Gibson 46).